The following is a 163-amino-acid chain: 6,7-dimethyl-8-ribityllumazine synthase (163 aa).

Residues F22, 56 to 58 (TFE), and 80 to 82 (AVI) contribute to the 5-amino-6-(D-ribitylamino)uracil site. 85-86 (GT) is a binding site for (2S)-2-hydroxy-3-oxobutyl phosphate. The Proton donor role is filled by H88. M113 is a binding site for 5-amino-6-(D-ribitylamino)uracil. R127 contacts (2S)-2-hydroxy-3-oxobutyl phosphate.

The protein belongs to the DMRL synthase family.

The enzyme catalyses (2S)-2-hydroxy-3-oxobutyl phosphate + 5-amino-6-(D-ribitylamino)uracil = 6,7-dimethyl-8-(1-D-ribityl)lumazine + phosphate + 2 H2O + H(+). Its pathway is cofactor biosynthesis; riboflavin biosynthesis; riboflavin from 2-hydroxy-3-oxobutyl phosphate and 5-amino-6-(D-ribitylamino)uracil: step 1/2. Its function is as follows. Catalyzes the formation of 6,7-dimethyl-8-ribityllumazine by condensation of 5-amino-6-(D-ribitylamino)uracil with 3,4-dihydroxy-2-butanone 4-phosphate. This is the penultimate step in the biosynthesis of riboflavin. This Anaeromyxobacter sp. (strain Fw109-5) protein is 6,7-dimethyl-8-ribityllumazine synthase.